Here is a 450-residue protein sequence, read N- to C-terminus: Putative serine/threonine-protein kinase R517/R518 (450 aa).

The Protein kinase domain occupies 9-290 (KMTDTVLGKG…WSELFHHYWF (282 aa)). Residues 15 to 23 (LGKGGFSEV) and K38 each bind ATP. The Proton acceptor role is filled by D140.

It belongs to the protein kinase superfamily. Ser/Thr protein kinase family.

It catalyses the reaction L-seryl-[protein] + ATP = O-phospho-L-seryl-[protein] + ADP + H(+). The catalysed reaction is L-threonyl-[protein] + ATP = O-phospho-L-threonyl-[protein] + ADP + H(+). This is Putative serine/threonine-protein kinase R517/R518 from Acanthamoeba polyphaga mimivirus (APMV).